We begin with the raw amino-acid sequence, 327 residues long: Thiamine-binding periplasmic protein (327 aa).

A signal peptide spans methionine 1–alanine 18. Residues aspartate 59–glycine 60, serine 161–threonine 162, tryptophan 197, and tyrosine 215–serine 218 contribute to the thiamine site.

Belongs to the bacterial solute-binding protein 1 family. Monomer in solution. The complex is composed of two ATP-binding proteins (ThiQ), two transmembrane proteins (ThiP) and a solute-binding protein (ThiB).

The protein localises to the periplasm. With respect to regulation, transport is inhibited by the sulfhydryl-specific modifier N-ethylmaleimide. Its function is as follows. Part of the ABC transporter complex ThiBPQ involved in thiamine import. Binds thiamine, thiamine phosphate and thiamine diphosphate with high affinity. This chain is Thiamine-binding periplasmic protein (thiB), found in Escherichia coli (strain K12).